Consider the following 369-residue polypeptide: GTPase Obg (369 aa).

Residues 1–159 (MKFIDEARIE…RMLKLELKVL (159 aa)) form the Obg domain. The tract at residues 128-147 (LHFKSSTNRAPRQKTDGKPG) is disordered. Residues 160 to 334 (ADVGLLGMPN…LCYAIYDYLA (175 aa)) form the OBG-type G domain. GTP is bound by residues 166 to 173 (GMPNAGKS), 191 to 195 (FTTLA), 213 to 216 (DIPG), 284 to 287 (NKLD), and 315 to 317 (SAL). The Mg(2+) site is built by Ser-173 and Thr-193.

The protein belongs to the TRAFAC class OBG-HflX-like GTPase superfamily. OBG GTPase family. As to quaternary structure, monomer. Mg(2+) is required as a cofactor.

The protein localises to the cytoplasm. In terms of biological role, an essential GTPase which binds GTP, GDP and possibly (p)ppGpp with moderate affinity, with high nucleotide exchange rates and a fairly low GTP hydrolysis rate. Plays a role in control of the cell cycle, stress response, ribosome biogenesis and in those bacteria that undergo differentiation, in morphogenesis control. The protein is GTPase Obg of Burkholderia multivorans (strain ATCC 17616 / 249).